The chain runs to 197 residues: Ion-translocating oxidoreductase complex subunit B (197 aa).

The segment at 1–26 (MSTILIAIIALAVLAAVFGAILGFAS) is hydrophobic. Residues 32–90 (EADPIVDQIDTILPQTQCGQCGYPGCRPYAEAIANGDKINKCPPGGQATIEKLADLMGV) form the 4Fe-4S domain. 12 residues coordinate [4Fe-4S] cluster: cysteine 49, cysteine 52, cysteine 57, cysteine 73, cysteine 114, cysteine 117, cysteine 120, cysteine 124, cysteine 144, cysteine 147, cysteine 150, and cysteine 154. 2 4Fe-4S ferredoxin-type domains span residues 105-134 (TVAF…GGTK) and 135-164 (ALHT…MIPV).

The protein belongs to the 4Fe4S bacterial-type ferredoxin family. RnfB subfamily. As to quaternary structure, the complex is composed of six subunits: RnfA, RnfB, RnfC, RnfD, RnfE and RnfG. Requires [4Fe-4S] cluster as cofactor.

Its subcellular location is the cell inner membrane. Functionally, part of a membrane-bound complex that couples electron transfer with translocation of ions across the membrane. The chain is Ion-translocating oxidoreductase complex subunit B from Vibrio atlanticus (strain LGP32) (Vibrio splendidus (strain Mel32)).